Here is a 156-residue protein sequence, read N- to C-terminus: Acyl carrier protein, mitochondrial (156 aa).

A mitochondrion-targeting transit peptide spans Met1–Tyr68. Residues Glu77–Lys152 enclose the Carrier domain. N6-acetyllysine is present on Lys88. The residue at position 112 (Ser112) is an O-(pantetheine 4'-phosphoryl)serine.

In terms of assembly, mammalian complex I is composed of 45 different subunits. Interacts with ETFRF1. Identified in a complex composed of MALSU1, MIEF1 upstream open reading frame protein and NDUFAB1; within the trimeric complex MIEF1 upstream open reading frame protein functions as a bridging scaffold that interacts with MALSU1 on one side, and with NDUFAB1 on the other side. The complex interacts with the mitochondrial large ribosomal subunit. Interacts with alpha-1-microglobulin chain; this interaction is required for the maintenance of mitochondrial redox homeostasis. Component of the mitochondrial core iron-sulfur cluster (ISC) complex composed of NFS1, LYRM4, NDUFAB1, ISCU, FXN, and FDX2; this complex is a heterohexamer containing two copies of each monomer. Component of the cyteine desulfurase complex composed of NFS1, LYRM4 and NDUFAB1; this complex contributes to the stability and cysteine desulfurase activity of NFS1. Phosphopantetheinylation at Ser-112 is essential for interactions with LYR motif-containing proteins.

The protein resides in the mitochondrion. Its function is as follows. Carrier of the growing fatty acid chain in fatty acid biosynthesis. Accessory and non-catalytic subunit of the mitochondrial membrane respiratory chain NADH dehydrogenase (Complex I), which functions in the transfer of electrons from NADH to the respiratory chain. Accessory protein, of the core iron-sulfur cluster (ISC) assembly complex, that regulates, in association with LYRM4, the stability and the cysteine desulfurase activity of NFS1 and participates in the [2Fe-2S] clusters assembly on the scaffolding protein ISCU. The core iron-sulfur cluster (ISC) assembly complex is involved in the de novo synthesis of a [2Fe-2S] cluster, the first step of the mitochondrial iron-sulfur protein biogenesis. This process is initiated by the cysteine desulfurase complex (NFS1:LYRM4:NDUFAB1) that produces persulfide which is delivered on the scaffold protein ISCU in a FXN-dependent manner. Then this complex is stabilized by FDX2 which provides reducing equivalents to accomplish the [2Fe-2S] cluster assembly. Finally, the [2Fe-2S] cluster is transferred from ISCU to chaperone proteins, including HSCB, HSPA9 and GLRX5. This is Acyl carrier protein, mitochondrial from Bos taurus (Bovine).